We begin with the raw amino-acid sequence, 289 residues long: 4-hydroxybenzoate octaprenyltransferase (289 aa).

The next 8 membrane-spanning stretches (helical) occupy residues 21–40 (PIGT…LAAG), 95–115 (VLAL…TMNS), 116–136 (LTIA…FMKR), 138–158 (IPIP…MAYA), 161–181 (ANAL…WTIA), 213–233 (IIGV…QLMG), 236–256 (AWYY…QRLI), and 268–288 (FLNN…NYLL).

It belongs to the UbiA prenyltransferase family. Mg(2+) serves as cofactor.

The protein resides in the cell inner membrane. It carries out the reaction all-trans-octaprenyl diphosphate + 4-hydroxybenzoate = 4-hydroxy-3-(all-trans-octaprenyl)benzoate + diphosphate. The protein operates within cofactor biosynthesis; ubiquinone biosynthesis. Functionally, catalyzes the prenylation of para-hydroxybenzoate (PHB) with an all-trans polyprenyl group. Mediates the second step in the final reaction sequence of ubiquinone-8 (UQ-8) biosynthesis, which is the condensation of the polyisoprenoid side chain with PHB, generating the first membrane-bound Q intermediate 3-octaprenyl-4-hydroxybenzoate. This is 4-hydroxybenzoate octaprenyltransferase from Aeromonas salmonicida (strain A449).